A 315-amino-acid chain; its full sequence is Olfactory receptor 51L1 (315 aa).

The Extracellular portion of the chain corresponds to 1 to 27 (MGDWNNSDAVEPIFILRGFPGLEYVHS). Asparagine 5 carries N-linked (GlcNAc...) asparagine glycosylation. The chain crosses the membrane as a helical span at residues 28 to 48 (WLSILFCLAYLVAFMGNVTIL). Over 49–56 (SVIWIESS) the chain is Cytoplasmic. The helical transmembrane segment at 57 to 77 (LHQPMYYFISILAVNDLGMSL) threads the bilayer. The Extracellular portion of the chain corresponds to 78–101 (STLPTMLAVLWLDAPEIQASACYA). A disulfide bridge links cysteine 99 with cysteine 191. A helical transmembrane segment spans residues 102 to 122 (QLFFIHTFTFLESSVLLAMAF). Topologically, residues 123-141 (DRFVAICHPLHYPTILTNS) are cytoplasmic. A helical membrane pass occupies residues 142-162 (VIGKIGLACLLRSLGVVLPTP). The Extracellular segment spans residues 163–198 (LLLRHYHYCHGNALSHAFCLHQDVLRLSCTDARTNS). The helical transmembrane segment at 199 to 219 (IYGLCVVIATLGVDSIFILLS) threads the bilayer. Over 220-239 (YVLILNTVLDIASREEQLKA) the chain is Cytoplasmic. The helical transmembrane segment at 240–260 (LNTCVSHICVVLIFFVPVIGV) threads the bilayer. The Extracellular portion of the chain corresponds to 261-275 (SMVHRFGKHLSPIVH). The helical transmembrane segment at 276-296 (ILMADIYLLLPPVLNPIVYSV) threads the bilayer. The Cytoplasmic portion of the chain corresponds to 297 to 315 (RTKQIRLGILHKFVLRRRF).

The protein belongs to the G-protein coupled receptor 1 family.

It is found in the cell membrane. In terms of biological role, odorant receptor. The chain is Olfactory receptor 51L1 (OR51L1) from Homo sapiens (Human).